Consider the following 475-residue polypeptide: Sulfate adenylyltransferase subunit 1 (475 aa).

Residues 25 to 239 (KSLLRFLTCG…EVLETVEIQR (215 aa)) form the tr-type G domain. The segment at 34–41 (GSVDDGKS) is G1. GTP is bound at residue 34 to 41 (GSVDDGKS). Positions 92-96 (GITID) are G2. Residues 113-116 (DTPG) are G3. GTP contacts are provided by residues 113 to 117 (DTPGH) and 168 to 171 (NKMD). Residues 168 to 171 (NKMD) are G4. A G5 region spans residues 206-208 (SAL).

The protein belongs to the TRAFAC class translation factor GTPase superfamily. Classic translation factor GTPase family. CysN/NodQ subfamily. Heterodimer composed of CysD, the smaller subunit, and CysN.

It carries out the reaction sulfate + ATP + H(+) = adenosine 5'-phosphosulfate + diphosphate. The protein operates within sulfur metabolism; hydrogen sulfide biosynthesis; sulfite from sulfate: step 1/3. Its function is as follows. With CysD forms the ATP sulfurylase (ATPS) that catalyzes the adenylation of sulfate producing adenosine 5'-phosphosulfate (APS) and diphosphate, the first enzymatic step in sulfur assimilation pathway. APS synthesis involves the formation of a high-energy phosphoric-sulfuric acid anhydride bond driven by GTP hydrolysis by CysN coupled to ATP hydrolysis by CysD. The protein is Sulfate adenylyltransferase subunit 1 of Escherichia coli (strain ATCC 8739 / DSM 1576 / NBRC 3972 / NCIMB 8545 / WDCM 00012 / Crooks).